A 447-amino-acid polypeptide reads, in one-letter code: tRNA modification GTPase MnmE (447 aa).

Residues R24, E81, and K120 each contribute to the (6S)-5-formyl-5,6,7,8-tetrahydrofolate site. Residues 216-371 (GLNVAIAGKP…LRKELSNISG (156 aa)) form the TrmE-type G domain. N226 is a K(+) binding site. GTP-binding positions include 226-231 (NAGKSS), 245-251 (TDIAGTT), and 270-273 (DTAG). Residue S230 coordinates Mg(2+). Residues T245, I247, and T250 each coordinate K(+). T251 is a Mg(2+) binding site. K447 provides a ligand contact to (6S)-5-formyl-5,6,7,8-tetrahydrofolate.

This sequence belongs to the TRAFAC class TrmE-Era-EngA-EngB-Septin-like GTPase superfamily. TrmE GTPase family. In terms of assembly, homodimer. Heterotetramer of two MnmE and two MnmG subunits. K(+) is required as a cofactor.

The protein localises to the cytoplasm. Exhibits a very high intrinsic GTPase hydrolysis rate. Involved in the addition of a carboxymethylaminomethyl (cmnm) group at the wobble position (U34) of certain tRNAs, forming tRNA-cmnm(5)s(2)U34. The protein is tRNA modification GTPase MnmE of Vesicomyosocius okutanii subsp. Calyptogena okutanii (strain HA).